Consider the following 238-residue polypeptide: ATP-dependent dethiobiotin synthetase BioD (238 aa).

12 to 17 lines the ATP pocket; the sequence is EVGKTV. Residue threonine 16 participates in Mg(2+) binding. Residue lysine 37 is part of the active site. A substrate-binding site is contributed by threonine 41. ATP is bound by residues aspartate 50, 109-112, 170-171, and 200-202; these read EGAG, GS, and PAG. Mg(2+) is bound by residues aspartate 50 and glutamate 109.

This sequence belongs to the dethiobiotin synthetase family. As to quaternary structure, homodimer. It depends on Mg(2+) as a cofactor.

The protein resides in the cytoplasm. It catalyses the reaction (7R,8S)-7,8-diammoniononanoate + CO2 + ATP = (4R,5S)-dethiobiotin + ADP + phosphate + 3 H(+). It functions in the pathway cofactor biosynthesis; biotin biosynthesis; biotin from 7,8-diaminononanoate: step 1/2. Functionally, catalyzes a mechanistically unusual reaction, the ATP-dependent insertion of CO2 between the N7 and N8 nitrogen atoms of 7,8-diaminopelargonic acid (DAPA, also called 7,8-diammoniononanoate) to form a ureido ring. This Streptomyces avermitilis (strain ATCC 31267 / DSM 46492 / JCM 5070 / NBRC 14893 / NCIMB 12804 / NRRL 8165 / MA-4680) protein is ATP-dependent dethiobiotin synthetase BioD.